Here is a 322-residue protein sequence, read N- to C-terminus: Protein-L-isoaspartate O-methyltransferase (322 aa).

The tract at residues Met-1–Pro-101 is disordered. Over residues Glu-14–Glu-29 the composition is skewed to basic and acidic residues. Low complexity-rich tracts occupy residues Ala-33–Ala-51 and His-76–Gly-91. Ser-170 is a catalytic residue.

Belongs to the methyltransferase superfamily. L-isoaspartyl/D-aspartyl protein methyltransferase family.

It localises to the cytoplasm. The enzyme catalyses [protein]-L-isoaspartate + S-adenosyl-L-methionine = [protein]-L-isoaspartate alpha-methyl ester + S-adenosyl-L-homocysteine. In terms of biological role, catalyzes the methyl esterification of L-isoaspartyl residues in peptides and proteins that result from spontaneous decomposition of normal L-aspartyl and L-asparaginyl residues. It plays a role in the repair and/or degradation of damaged proteins. In Burkholderia pseudomallei (strain 1710b), this protein is Protein-L-isoaspartate O-methyltransferase.